The chain runs to 248 residues: 4-hydroxy-tetrahydrodipicolinate reductase (248 aa).

NAD(+)-binding positions include 9 to 14, 77 to 79, and 104 to 107; these read GAKGRV, GTT, and APNF. The active-site Proton donor/acceptor is the His134. His135 provides a ligand contact to (S)-2,3,4,5-tetrahydrodipicolinate. Lys138 functions as the Proton donor in the catalytic mechanism. 144–145 serves as a coordination point for (S)-2,3,4,5-tetrahydrodipicolinate; it reads GT.

Belongs to the DapB family.

It localises to the cytoplasm. The enzyme catalyses (S)-2,3,4,5-tetrahydrodipicolinate + NAD(+) + H2O = (2S,4S)-4-hydroxy-2,3,4,5-tetrahydrodipicolinate + NADH + H(+). The catalysed reaction is (S)-2,3,4,5-tetrahydrodipicolinate + NADP(+) + H2O = (2S,4S)-4-hydroxy-2,3,4,5-tetrahydrodipicolinate + NADPH + H(+). It participates in amino-acid biosynthesis; L-lysine biosynthesis via DAP pathway; (S)-tetrahydrodipicolinate from L-aspartate: step 4/4. Catalyzes the conversion of 4-hydroxy-tetrahydrodipicolinate (HTPA) to tetrahydrodipicolinate. The protein is 4-hydroxy-tetrahydrodipicolinate reductase of Corynebacterium efficiens (strain DSM 44549 / YS-314 / AJ 12310 / JCM 11189 / NBRC 100395).